We begin with the raw amino-acid sequence, 465 residues long: Hexokinase-4 (465 aa).

Residues 10–454 (ATKKEKVEQI…SGRGAALVSA (445 aa)) form the Hexokinase domain. Residues 67 to 203 (EGSEVGDFLS…DFEMDVVAMV (137 aa)) are hexokinase small subdomain. 78 to 83 (DLGGTN) contributes to the ATP binding site. Substrate is bound by residues 151–152 (SF), 168–169 (TK), and 204–205 (ND). The interval 204-443 (NDTVATMISC…CEITFIESEE (240 aa)) is hexokinase large subdomain. Threonine 228 contributes to the ATP binding site. Substrate-binding residues include asparagine 231, glutamate 256, and glutamate 290. ATP-binding positions include 295–296 (GK), 332–336 (TRFVS), and 411–415 (SVYKL).

The protein belongs to the hexokinase family. As to quaternary structure, monomer. Interacts with MIDN; the interaction occurs preferentially at low glucose levels and results in inhibition of hexokinase activity. Interacts with GCKR; leading to sequestration in the nucleus.

The protein resides in the cytoplasm. It is found in the nucleus. The protein localises to the mitochondrion. The enzyme catalyses a D-hexose + ATP = a D-hexose 6-phosphate + ADP + H(+). It catalyses the reaction D-fructose + ATP = D-fructose 6-phosphate + ADP + H(+). It carries out the reaction D-glucose + ATP = D-glucose 6-phosphate + ADP + H(+). The catalysed reaction is D-mannose + ATP = D-mannose 6-phosphate + ADP + H(+). The protein operates within carbohydrate metabolism; hexose metabolism. It functions in the pathway carbohydrate degradation; glycolysis; D-glyceraldehyde 3-phosphate and glycerone phosphate from D-glucose: step 1/4. Its activity is regulated as follows. Subject to allosteric regulation. Low glucose and high fructose-6-phosphate triggers association with the inhibitor GCKR followed by sequestration in the nucleus. Catalyzes the phosphorylation of hexose, such as D-glucose, D-fructose and D-mannose, to hexose 6-phosphate (D-glucose 6-phosphate, D-fructose 6-phosphate and D-mannose 6-phosphate, respectively). Compared to other hexokinases, has a weak affinity for D-glucose, and is effective only when glucose is abundant. Mainly expressed in pancreatic beta cells and the liver and constitutes a rate-limiting step in glucose metabolism in these tissues. Since insulin secretion parallels glucose metabolism and the low glucose affinity of GCK ensures that it can change its enzymatic activity within the physiological range of glucose concentrations, GCK acts as a glucose sensor in the pancreatic beta cell. In pancreas, plays an important role in modulating insulin secretion. In liver, helps to facilitate the uptake and conversion of glucose by acting as an insulin-sensitive determinant of hepatic glucose usage. Required to provide D-glucose 6-phosphate for the synthesis of glycogen. Mediates the initial step of glycolysis by catalyzing phosphorylation of D-glucose to D-glucose 6-phosphate. This chain is Hexokinase-4, found in Mus musculus (Mouse).